The chain runs to 363 residues: Protein-arginine kinase (363 aa).

Positions 24–254 (IVLSSRIRLA…AQLIEQERSA (231 aa)) constitute a Phosphagen kinase C-terminal domain. ATP-binding positions include 27–31 (SSRIR), His-92, Arg-125, 176–180 (RASVM), and 207–212 (RGIYGE). Residues 337 to 342 (RDIRRA) carry the RDXXRA motif of the pArg binding pocket involved in allosteric regulation motif.

Belongs to the ATP:guanido phosphotransferase family.

The catalysed reaction is L-arginyl-[protein] + ATP = N(omega)-phospho-L-arginyl-[protein] + ADP + H(+). Appears to be allosterically activated by the binding of pArg-containing polypeptides to the pArg-binding pocket localized in the C-terminal domain of McsB. Functionally, catalyzes the specific phosphorylation of arginine residues in a large number of proteins. Is part of the bacterial stress response system. Protein arginine phosphorylation has a physiologically important role and is involved in the regulation of many critical cellular processes, such as protein homeostasis, motility, competence, and stringent and stress responses, by regulating gene expression and protein activity. The chain is Protein-arginine kinase from Bacillus licheniformis (strain ATCC 14580 / DSM 13 / JCM 2505 / CCUG 7422 / NBRC 12200 / NCIMB 9375 / NCTC 10341 / NRRL NRS-1264 / Gibson 46).